The sequence spans 257 residues: MDRIIEKLDHGWWVVSHEQKLWLPKGELPYGEAANFDLVGQRALQIGEWQGEPVWLVQQQRRHDMGSVRQVIDLDVVLFQLAGRGVQLAEFYRSHKYCGYCGHEMYPSKTEWAMLCSHCRERYYPQIAPCIIVAIRRDDSILLAQHTRHRNGVHTVLAGFVEVGETLEQAVAREVMEESGIKVKNLRYVTSQPWPFPQSLMTAFMAEYDSGDIVIDPKELLEANWYRYDDLPLLPPPGTVARRLIEDTVAMCRAEYE.

Lysine 25 and arginine 69 together coordinate substrate. Zn(2+)-binding residues include cysteine 98 and cysteine 101. A substrate-binding site is contributed by glutamate 111. 2 residues coordinate Zn(2+): cysteine 116 and cysteine 119. Tyrosine 124 is a binding site for substrate. The region spanning 125–248 (PQIAPCIIVA…TVARRLIEDT (124 aa)) is the Nudix hydrolase domain. A divalent metal cation-binding residues include alanine 158, glutamate 174, and glutamate 178. Positions 159–180 (GFVEVGETLEQAVAREVMEESG) match the Nudix box motif. 192 to 199 (QPWPFPQS) serves as a coordination point for substrate. Glutamate 219 contributes to the a divalent metal cation binding site. Alanine 241 is a binding site for substrate.

The protein belongs to the Nudix hydrolase family. NudC subfamily. As to quaternary structure, homodimer. Mg(2+) is required as a cofactor. Mn(2+) serves as cofactor. The cofactor is Zn(2+).

The enzyme catalyses a 5'-end NAD(+)-phospho-ribonucleoside in mRNA + H2O = a 5'-end phospho-adenosine-phospho-ribonucleoside in mRNA + beta-nicotinamide D-ribonucleotide + 2 H(+). It carries out the reaction NAD(+) + H2O = beta-nicotinamide D-ribonucleotide + AMP + 2 H(+). The catalysed reaction is NADH + H2O = reduced beta-nicotinamide D-ribonucleotide + AMP + 2 H(+). MRNA decapping enzyme that specifically removes the nicotinamide adenine dinucleotide (NAD) cap from a subset of mRNAs by hydrolyzing the diphosphate linkage to produce nicotinamide mononucleotide (NMN) and 5' monophosphate mRNA. The NAD-cap is present at the 5'-end of some mRNAs and stabilizes RNA against 5'-processing. Has preference for mRNAs with a 5'-end purine. Catalyzes the hydrolysis of a broad range of dinucleotide pyrophosphates. The protein is NAD-capped RNA hydrolase NudC of Shigella boydii serotype 18 (strain CDC 3083-94 / BS512).